The sequence spans 267 residues: Undecaprenyl-diphosphatase (267 aa).

8 helical membrane passes run Met-1–Ile-21, Gln-39–Phe-59, Ala-83–Met-103, Leu-111–Val-131, Thr-144–Thr-164, Phe-189–Thr-209, Phe-218–Leu-238, and Met-246–Met-266.

This sequence belongs to the UppP family.

The protein resides in the cell inner membrane. It catalyses the reaction di-trans,octa-cis-undecaprenyl diphosphate + H2O = di-trans,octa-cis-undecaprenyl phosphate + phosphate + H(+). Catalyzes the dephosphorylation of undecaprenyl diphosphate (UPP). Confers resistance to bacitracin. The protein is Undecaprenyl-diphosphatase of Vibrio campbellii (strain ATCC BAA-1116).